Reading from the N-terminus, the 204-residue chain is Secreted phosphoprotein 24 (204 aa).

The N-terminal stretch at 1–23 is a signal peptide; sequence MEKRAMRMLAMFVLGTSFWSCAG. Intrachain disulfides connect Cys-86/Cys-97 and Cys-110/Cys-128. Position 90 is a phosphoserine (Ser-90). Residues Ser-138, Ser-139, Ser-166, and Ser-175 each carry the phosphoserine modification. A disordered region spans residues 179 to 204; that stretch reads MRRFPPPGNRSFPNQWPRARTNTGFE.

The protein belongs to the SPP2 family. In terms of processing, multiply phosphorylated at serine residues. Post-translationally, phosphorylation sites are present in the extracellular medium.

It localises to the secreted. In terms of biological role, could coordinate an aspect of bone turnover. The polypeptide is Secreted phosphoprotein 24 (SPP2) (Sus scrofa (Pig)).